The primary structure comprises 663 residues: MNFRYNQTPFGYQRRKTREVKVGDVKVGGNNPIVIQSMINSDTTDTQGSVKQILELERAGCEIVRLTVPSQADADNLPSIRQELKKAGSKVPLVADIHFTPSVAMKAVEYVEKVRINPGNFADKKKFAVRDYTDLKYNQELERISEVFSPLVLRCKELGVSMRIGTNHGSLSDRIMNRYGDTPQGMVESALEFIRIAESLGYYDIIVSMKASNPQVMVQAYRMLASRFNELKMDYPLHLGVTEAGDGNDGRIKSAIGIGSLLEDGLGDTIRVSLTEDPVLEVPVAKLLADKFNKKISNLNSVKGYSEFRNPFSYNRFYSSEIKIVQFEAGENHPVRVETILPFENSNSFLENVAKLYQYGKSLSIEPESILVDSPLPDQLKEISEAATALSIPVGILLSKNVSLNEKLQKELLSFPKIVFDPFLQFQDGEKMLSFLKERQNAGLFSEIHTSGDKLDSLRGLPDTLSEIGIKNVLFSLDSKEILYDYRKLGSILSRFEFPILLHGSFSNPEEALYNSAIGIGGLLIDGIGDLIRISTSKIKDIEEIFQLSYDLLQGTRLRLTKTEYISCPSCGRTLFDLQETTARIKSRTGHLKGVKIAVMGCIVNGPGEMADADFGYVGAGPGKVHLYRGKEIVLKNVPSEIADEKLVQLIKDNELWQDPSND.

Positions 568, 571, 602, and 609 each coordinate [4Fe-4S] cluster.

It belongs to the IspG family. [4Fe-4S] cluster is required as a cofactor.

The enzyme catalyses (2E)-4-hydroxy-3-methylbut-2-enyl diphosphate + oxidized [flavodoxin] + H2O + 2 H(+) = 2-C-methyl-D-erythritol 2,4-cyclic diphosphate + reduced [flavodoxin]. It participates in isoprenoid biosynthesis; isopentenyl diphosphate biosynthesis via DXP pathway; isopentenyl diphosphate from 1-deoxy-D-xylulose 5-phosphate: step 5/6. Functionally, converts 2C-methyl-D-erythritol 2,4-cyclodiphosphate (ME-2,4cPP) into 1-hydroxy-2-methyl-2-(E)-butenyl 4-diphosphate. The chain is 4-hydroxy-3-methylbut-2-en-1-yl diphosphate synthase (flavodoxin) from Leptospira interrogans serogroup Icterohaemorrhagiae serovar copenhageni (strain Fiocruz L1-130).